The chain runs to 101 residues: Aspartyl/glutamyl-tRNA(Asn/Gln) amidotransferase subunit C (101 aa).

This sequence belongs to the GatC family. Heterotrimer of A, B and C subunits.

It catalyses the reaction L-glutamyl-tRNA(Gln) + L-glutamine + ATP + H2O = L-glutaminyl-tRNA(Gln) + L-glutamate + ADP + phosphate + H(+). It carries out the reaction L-aspartyl-tRNA(Asn) + L-glutamine + ATP + H2O = L-asparaginyl-tRNA(Asn) + L-glutamate + ADP + phosphate + 2 H(+). In terms of biological role, allows the formation of correctly charged Asn-tRNA(Asn) or Gln-tRNA(Gln) through the transamidation of misacylated Asp-tRNA(Asn) or Glu-tRNA(Gln) in organisms which lack either or both of asparaginyl-tRNA or glutaminyl-tRNA synthetases. The reaction takes place in the presence of glutamine and ATP through an activated phospho-Asp-tRNA(Asn) or phospho-Glu-tRNA(Gln). The sequence is that of Aspartyl/glutamyl-tRNA(Asn/Gln) amidotransferase subunit C from Lactococcus lactis subsp. cremoris (strain MG1363).